We begin with the raw amino-acid sequence, 333 residues long: ATP synthase subunit a (333 aa).

Residues 1–32 form the signal peptide; it reads MIYLHNKRKGMLKRLSALIVIGLLMNLPAVFA. Transmembrane regions (helical) follow at residues 100–120, 161–181, 185–205, 229–249, 254–274, 279–299, and 300–320; these read HVVM…GVGN, FMPF…IGLV, ATAT…FLVT, LMWI…PFAL, FANM…IFVF, IAPV…LVAF, and LQAY…VAHE.

It belongs to the ATPase A chain family. In terms of assembly, F-type ATPases have 2 components, CF(1) - the catalytic core - and CF(0) - the membrane proton channel. CF(1) has five subunits: alpha(3), beta(3), gamma(1), delta(1), epsilon(1). CF(0) has four main subunits: a, b, b' and c.

The protein resides in the cell inner membrane. Its function is as follows. Key component of the proton channel; it plays a direct role in the translocation of protons across the membrane. This Chloroherpeton thalassium (strain ATCC 35110 / GB-78) protein is ATP synthase subunit a.